A 427-amino-acid chain; its full sequence is Nucleolar and spindle-associated protein 1 (427 aa).

A disordered region spans residues 41 to 190 (AHLNPETRKE…LGNNKRTSAT (150 aa)). A compositionally biased stretch (basic and acidic residues) spans 43–55 (LNPETRKENKNQD). Residues 83 to 96 (TKTRRRRRKKHKTI) show a composition bias toward basic residues. The span at 119–128 (NFQNQENQEN) shows a compositional bias: low complexity. S139 bears the Phosphoserine mark. Over residues 159–179 (NDIKDSKKPLEKRSLCTDEFS) the composition is skewed to basic and acidic residues. Polar residues predominate over residues 181-190 (LGNNKRTSAT). T191 bears the Phosphothreonine mark. Residues 235 to 312 (IVTPVPPRGR…QAVFRTPKSK (78 aa)) are disordered. Residues 243-367 (GRLSVPCTPA…HKGKLKPWGQ (125 aa)) are interaction with microtubules. Phosphoserine is present on S246. Phosphothreonine is present on T250. The span at 252–264 (ARQQCPQGHSATK) shows a compositional bias: polar residues. Phosphoserine is present on S261. Phosphothreonine occurs at positions 323 and 334. S337 and S348 each carry phosphoserine. Residues 354-427 (NYKPHKGKLK…RRNLGVTKAQ (74 aa)) are disordered. The KEN box signature appears at 369–375 (KENNSLN). Positions 393–425 (LQTREERWKRQEQERKEKKEKLLEARRNLGVTK) form a coiled coil. Positions 394-419 (QTREERWKRQEQERKEKKEKLLEARR) are enriched in basic and acidic residues.

The protein belongs to the NUSAP family. In terms of assembly, interacts with DNA and microtubules. Microtubule bundling is inhibited by IPO7, KPNA2 and KPNB1 while association with DNA is also inhibited by IPO7 and KPNA2. Ubiquitinated. Ubiquitination by FZR1 may lead to proteasome-dependent degradation of this protein.

Its subcellular location is the cytoplasm. It localises to the nucleus. The protein resides in the nucleolus. It is found in the cytoskeleton. The protein localises to the spindle. Its subcellular location is the chromosome. Microtubule-associated protein with the capacity to bundle and stabilize microtubules. May associate with chromosomes and promote the organization of mitotic spindle microtubules around them. In Mus musculus (Mouse), this protein is Nucleolar and spindle-associated protein 1 (Nusap1).